The sequence spans 349 residues: Merozoite surface protein P38 (349 aa).

The N-terminal stretch at 1-21 is a signal peptide; sequence MKRWSIITGIVIIFCILTCKG. 6-Cys domains are found at residues 22 to 149 and 153 to 301; these read QVEN…ISNG and KIPG…YLTN. 4 cysteine pairs are disulfide-bonded: Cys-77–Cys-127, Cys-157–Cys-183, Cys-197–Cys-278, and Cys-208–Cys-276. Asn-294, Asn-295, and Asn-301 each carry an N-linked (GlcNAc...) asparagine glycan. Asn-315 is lipidated: GPI-anchor amidated asparagine. Positions 316 to 349 are cleaved as a propeptide — removed in mature form; that stretch reads SEIFERIEREEISFAFSSYLSITLILLYLFFLNF.

It is found in the cell surface. It localises to the cell membrane. In Plasmodium falciparum (isolate 3D7), this protein is Merozoite surface protein P38 (PFS38).